A 224-amino-acid polypeptide reads, in one-letter code: Ribulose-phosphate 3-epimerase (224 aa).

Ser-8 is a substrate binding site. His-31, Asp-33, and His-64 together coordinate a divalent metal cation. The active-site Proton acceptor is the Asp-33. Residues His-64, Gly-140 to Gly-143, Asp-173 to Gly-175, and Gly-195 to Ser-196 contribute to the substrate site. A divalent metal cation is bound at residue Asp-173. Asp-173 acts as the Proton donor in catalysis.

The protein belongs to the ribulose-phosphate 3-epimerase family. The cofactor is a divalent metal cation.

The enzyme catalyses D-ribulose 5-phosphate = D-xylulose 5-phosphate. The protein operates within carbohydrate degradation. Functionally, catalyzes the reversible epimerization of D-ribulose 5-phosphate to D-xylulose 5-phosphate. This chain is Ribulose-phosphate 3-epimerase, found in Mycobacterium leprae (strain TN).